Reading from the N-terminus, the 204-residue chain is Per os infectivity factor 3 (204 aa).

As to quaternary structure, forms the PIF complex together with PIF1 and PIF2. The complex also interacts with per os infectivity factor PIF0.

Its function is as follows. Per os factor that plays a role in the initiation of host midgut infection. Unlike PIF1 and PIF2, PIF3 is not involved in specific binding of occluded virions (ODV) to the host midgut target cells. In Lepidoptera (butterflies and moths), this protein is Per os infectivity factor 3 (AC115).